The following is a 181-amino-acid chain: Ras-like protein 1 (181 aa).

10 to 17 (GAGGVGKS) contacts GTP. The Effector region motif lies at 32-40 (YDPTIEDSY). Residues 57-61 (DTAGQ) and 116-119 (NKCD) contribute to the GTP site. C178 is modified (cysteine methyl ester). A lipid anchor (S-geranylgeranyl cysteine) is attached at C178. The propeptide at 179–181 (KML) is removed in mature form.

This sequence belongs to the small GTPase superfamily. Ras family.

It localises to the cell membrane. The catalysed reaction is GTP + H2O = GDP + phosphate + H(+). With respect to regulation, alternates between an inactive form bound to GDP and an active form bound to GTP. Activated by a guanine nucleotide-exchange factor (GEF) and inactivated by a GTPase-activating protein (GAP). Functionally, ras proteins bind GDP/GTP and possess intrinsic GTPase activity. Plays a role in eye development by regulating cell growth, survival of postmitotic ommatidial cells and differentiation of photoreceptor cells. During larval development, mediates Ptth/tor signaling leading to the production of ecdysone, a hormone required for the initiation of metamorphosis. This chain is Ras-like protein 1, found in Drosophila mojavensis (Fruit fly).